A 1196-amino-acid polypeptide reads, in one-letter code: ATP-dependent helicase/deoxyribonuclease subunit B (1196 aa).

The [4Fe-4S] cluster site is built by Cys823, Cys1149, Cys1152, and Cys1158.

This sequence belongs to the helicase family. AddB/RexB type 2 subfamily. In terms of assembly, heterodimer of AddA and RexB. Mg(2+) serves as cofactor. Requires [4Fe-4S] cluster as cofactor.

Functionally, the heterodimer acts as both an ATP-dependent DNA helicase and an ATP-dependent, dual-direction single-stranded exonuclease. Recognizes the chi site generating a DNA molecule suitable for the initiation of homologous recombination. This subunit has 5' -&gt; 3' nuclease activity but not helicase activity. This Enterococcus faecalis (strain ATCC 700802 / V583) protein is ATP-dependent helicase/deoxyribonuclease subunit B.